Reading from the N-terminus, the 194-residue chain is Adenylate kinase isoenzyme 1 (194 aa).

At M1 the chain carries N-acetylmethionine. ATP is bound at residue 18-23; sequence GSGKGT. Phosphoserine is present on S38. The NMP stretch occupies residues 38–67; that stretch reads STGDLLRAEVSSGSSRGKMLSSIMEKGELV. AMP contacts are provided by residues T39, R44, 65-67, 94-97, and Q101; these read ELV and GYPR. An LID region spans residues 131 to 141; sequence KRGETSGRVDD. An ATP-binding site is contributed by R132. The AMP site is built by R138 and R149. G177 serves as a coordination point for ATP.

This sequence belongs to the adenylate kinase family. AK1 subfamily. Monomer. The cofactor is Mg(2+).

It localises to the cytoplasm. It catalyses the reaction a ribonucleoside 5'-phosphate + ATP = a ribonucleoside 5'-diphosphate + ADP. It carries out the reaction AMP + ATP = 2 ADP. The catalysed reaction is dAMP + ATP = dADP + ADP. The enzyme catalyses dATP + AMP = dADP + ADP. It catalyses the reaction dAMP + dATP = 2 dADP. It carries out the reaction a 2'-deoxyribonucleoside 5'-diphosphate + ATP = a 2'-deoxyribonucleoside 5'-triphosphate + ADP. The catalysed reaction is a ribonucleoside 5'-diphosphate + ATP = a ribonucleoside 5'-triphosphate + ADP. The enzyme catalyses CDP + GTP = CTP + GDP. It catalyses the reaction GDP + ATP = GTP + ADP. It carries out the reaction UDP + ATP = UTP + ADP. The catalysed reaction is GTP + UDP = UTP + GDP. The enzyme catalyses dTDP + GTP = dTTP + GDP. It catalyses the reaction dCDP + GTP = dCTP + GDP. It carries out the reaction dGDP + ATP = dGTP + ADP. The catalysed reaction is dADP + GTP = dATP + GDP. The enzyme catalyses thiamine diphosphate + ADP = thiamine triphosphate + AMP. Catalyzes the reversible transfer of the terminal phosphate group between ATP and AMP. Also displays broad nucleoside diphosphate kinase activity. Plays an important role in cellular energy homeostasis and in adenine nucleotide metabolism. Also catalyzes at a very low rate the synthesis of thiamine triphosphate (ThTP) from thiamine diphosphate (ThDP) and ADP. In Rattus norvegicus (Rat), this protein is Adenylate kinase isoenzyme 1 (Ak1).